Here is a 348-residue protein sequence, read N- to C-terminus: MKIIKEIPEKNIIKVMPENLDDLWHLSNIILKNNAVSAMTERRTEDKGDKLRADRGTKRRVYLGVKAEKIKFDENTNRLRVSGPIIHGPEDVPIGSYHTIDIEPLKDVSIQKNWKKWDLQRLKDAENSAKKPKIIVVIMDDSDATVFIIRDYGVKEIGHIKSRLSKKLDYKRQDQENINYYNEILEVMSPYEGKILVAGPGFTKNNFQKYLSEKHKDMLQRVVFESTNHTGRLGLAEVLKSGIVDRIYGEARLSKETQLVNKLLEEISKKGLAVYGVDDVKNALNYSAIETLLITDEFLRKNRRILEDLINSVEAIGGSSIIISTEYDVGKQLKALGGIGGLLRFPIE.

The protein belongs to the eukaryotic release factor 1 family. Pelota subfamily. As to quaternary structure, monomer. A divalent metal cation serves as cofactor.

It is found in the cytoplasm. Its function is as follows. May function in recognizing stalled ribosomes, interact with stem-loop structures in stalled mRNA molecules, and effect endonucleolytic cleavage of the mRNA. May play a role in the release non-functional ribosomes and degradation of damaged mRNAs. Has endoribonuclease activity. The polypeptide is Protein pelota homolog (Methanococcus aeolicus (strain ATCC BAA-1280 / DSM 17508 / OCM 812 / Nankai-3)).